Here is a 160-residue protein sequence, read N- to C-terminus: uncharacterized protein (160 aa).

Residues methionine 1 to threonine 21 traverse the membrane as a helical segment.

Belongs to the IIV-6 203L/325L family.

The protein resides in the membrane. This is an uncharacterized protein from Invertebrate iridescent virus 6 (IIV-6).